The chain runs to 40 residues: Photosystem II reaction center protein J (40 aa).

A helical transmembrane segment spans residues 8–28; sequence IPLWIIGTVTGIPVIGLIGIF.

Belongs to the PsbJ family. As to quaternary structure, PSII is composed of 1 copy each of membrane proteins PsbA, PsbB, PsbC, PsbD, PsbE, PsbF, PsbH, PsbI, PsbJ, PsbK, PsbL, PsbM, PsbT, PsbX, PsbY, PsbZ, Psb30/Ycf12, at least 3 peripheral proteins of the oxygen-evolving complex and a large number of cofactors. It forms dimeric complexes.

It localises to the plastid. It is found in the chloroplast thylakoid membrane. One of the components of the core complex of photosystem II (PSII). PSII is a light-driven water:plastoquinone oxidoreductase that uses light energy to abstract electrons from H(2)O, generating O(2) and a proton gradient subsequently used for ATP formation. It consists of a core antenna complex that captures photons, and an electron transfer chain that converts photonic excitation into a charge separation. This is Photosystem II reaction center protein J from Citrus sinensis (Sweet orange).